We begin with the raw amino-acid sequence, 347 residues long: Phenylalanine--tRNA ligase alpha subunit (347 aa).

Position 268 (Glu-268) interacts with Mg(2+).

The protein belongs to the class-II aminoacyl-tRNA synthetase family. Phe-tRNA synthetase alpha subunit type 1 subfamily. In terms of assembly, tetramer of two alpha and two beta subunits. Mg(2+) serves as cofactor.

The protein resides in the cytoplasm. The catalysed reaction is tRNA(Phe) + L-phenylalanine + ATP = L-phenylalanyl-tRNA(Phe) + AMP + diphosphate + H(+). The polypeptide is Phenylalanine--tRNA ligase alpha subunit (Leptothrix cholodnii (strain ATCC 51168 / LMG 8142 / SP-6) (Leptothrix discophora (strain SP-6))).